A 337-amino-acid chain; its full sequence is Phenylalanine--tRNA ligase alpha subunit (337 aa).

Glu-258 serves as a coordination point for Mg(2+).

The protein belongs to the class-II aminoacyl-tRNA synthetase family. Phe-tRNA synthetase alpha subunit type 1 subfamily. Tetramer of two alpha and two beta subunits. Requires Mg(2+) as cofactor.

The protein localises to the cytoplasm. It catalyses the reaction tRNA(Phe) + L-phenylalanine + ATP = L-phenylalanyl-tRNA(Phe) + AMP + diphosphate + H(+). The chain is Phenylalanine--tRNA ligase alpha subunit from Paraburkholderia phytofirmans (strain DSM 17436 / LMG 22146 / PsJN) (Burkholderia phytofirmans).